We begin with the raw amino-acid sequence, 302 residues long: Probable E3 ubiquitin-protein ligase RZFP34 (302 aa).

A CHY-type zinc finger spans residues Glu-54–Val-130. Zn(2+) contacts are provided by Cys-61, His-63, Cys-74, Cys-75, Cys-81, Cys-84, His-85, His-100, Cys-112, Cys-115, Cys-125, Cys-128, Cys-137, Cys-140, His-153, Cys-154, Cys-157, Cys-160, His-170, Cys-171, Cys-174, Cys-177, His-186, and Cys-188. The segment at Met-132–Asp-196 adopts a CTCHY-type zinc-finger fold. An RING-type; atypical zinc finger spans residues Cys-197 to Ser-240.

The protein localises to the nucleus. The enzyme catalyses S-ubiquitinyl-[E2 ubiquitin-conjugating enzyme]-L-cysteine + [acceptor protein]-L-lysine = [E2 ubiquitin-conjugating enzyme]-L-cysteine + N(6)-ubiquitinyl-[acceptor protein]-L-lysine.. The protein operates within protein modification; protein ubiquitination. Functionally, possesses transactivation activity in yeast cells. Involved in the regulation of stomatal aperture. May modulate the expression of genes that control stomata opening during heat shock or drought stress. The sequence is that of Probable E3 ubiquitin-protein ligase RZFP34 from Oryza sativa subsp. japonica (Rice).